A 511-amino-acid chain; its full sequence is Dihydrolipoyl dehydrogenase, mitochondrial (511 aa).

FAD-binding positions include 75–84, Lys-93, Gly-157, and 187–189; these read EKRGTLGGTC and TGS. A disulfide bridge links Cys-84 with Cys-89. NAD(+) contacts are provided by residues 224 to 231, Glu-247, Leu-281, and Gly-316; that span reads GGGIIGLE. Residues Asp-357 and 363–366 each bind FAD; that span reads MLAH. Catalysis depends on His-489, which acts as the Proton acceptor.

The protein belongs to the class-I pyridine nucleotide-disulfide oxidoreductase family. As to quaternary structure, homodimer. FAD is required as a cofactor.

It localises to the mitochondrion matrix. The catalysed reaction is N(6)-[(R)-dihydrolipoyl]-L-lysyl-[protein] + NAD(+) = N(6)-[(R)-lipoyl]-L-lysyl-[protein] + NADH + H(+). Lipoamide dehydrogenase is a component of the alpha-ketoacid dehydrogenase complexes. Malfunction of this protein blocks the progression of cell cycle from G1 to S phase. The sequence is that of Dihydrolipoyl dehydrogenase, mitochondrial (dld1) from Schizosaccharomyces pombe (strain 972 / ATCC 24843) (Fission yeast).